We begin with the raw amino-acid sequence, 414 residues long: MGGSGNWIKSLITNKKNITDDQEKNIKKKWKLWRTSSEGLISSSKGFKSRGGSYGTPSLGSDPPSFSADDSFTAAVAAVIRAPPKDFFLVKREWAATRIQAAFRAFLARQALRALKAVVRIQAIFRGRQVRKQADVTLRCMQALVRVQARVRAHCNRGPSDGQELEKPSDQQKDDPAKQAEKGWCDSPGSINEVRTKLQMRQEGAIKRERAMVYALTHQPRTCPSPAKASKQGSVKKNNGSCKSSPGWNWLDRWVADRPWEGRLMEGPTNSSENARKSESSVSEHDTVQVRKNNLTTRVLARPPPMSSSATSSESSSTSQSPVPFSGSFLEEGGYYRKPSYMSLTQSIKAKQRRSGSSSSCSKTPFEKKQSMSYNGDVNVRRSAGSDPLNNQWTDLYPPAQVTGRHMWAKSQRG.

Residues 14 to 21 (NKKNITDD) carry the Nuclear localization signal 1 motif. A disordered region spans residues 40 to 61 (LISSSKGFKSRGGSYGTPSLGS). IQ domains follow at residues 92–120 (REWAATRIQAAFRAFLARQALRALKAVVR), 121–143 (IQAIFRGRQVRKQADVTLRCMQA), and 144–169 (LVRVQARVRAHCNRGPSDGQELEKPS). The calmodulin-binding stretch occupies residues 119-132 (VRIQAIFRGRQVRK). Disordered stretches follow at residues 156-190 (NRGPSDGQELEKPSDQQKDDPAKQAEKGWCDSPGS), 218-244 (HQPRTCPSPAKASKQGSVKKNNGSCKS), and 262-329 (GRLM…SGSF). The span at 164-184 (ELEKPSDQQKDDPAKQAEKGW) shows a compositional bias: basic and acidic residues. Residues 231–244 (KQGSVKKNNGSCKS) show a composition bias toward polar residues. Residues 274–289 (NARKSESSVSEHDTVQ) are compositionally biased toward basic and acidic residues. Positions 307 to 328 (SSSATSSESSSTSQSPVPFSGS) are enriched in low complexity. The Nuclear localization signal 2 motif lies at 336–343 (YRKPSYMS). The disordered stretch occupies residues 347–398 (SIKAKQRRSGSSSSCSKTPFEKKQSMSYNGDVNVRRSAGSDPLNNQWTDLYP).

The protein belongs to the IQD family. Binds to multiple calmodulin (CaM) in the presence of Ca(2+) and CaM-like proteins.

It is found in the nucleus. It localises to the cytoplasm. The protein localises to the cytoskeleton. The protein resides in the nucleus envelope. May be involved in cooperative interactions with calmodulins or calmodulin-like proteins. Recruits calmodulin proteins to microtubules, thus being a potential scaffold in cellular signaling and trafficking. May associate with nucleic acids and regulate gene expression at the transcriptional or post-transcriptional level. In Arabidopsis thaliana (Mouse-ear cress), this protein is Protein IQ-DOMAIN 8.